Reading from the N-terminus, the 105-residue chain is Large ribosomal subunit protein bL21 (105 aa).

The protein belongs to the bacterial ribosomal protein bL21 family. As to quaternary structure, part of the 50S ribosomal subunit. Contacts protein L20.

In terms of biological role, this protein binds to 23S rRNA in the presence of protein L20. This chain is Large ribosomal subunit protein bL21, found in Rickettsia africae (strain ESF-5).